The chain runs to 230 residues: Bidirectional sugar transporter SWEET2b (230 aa).

Over 1–6 the chain is Extracellular; that stretch reads MDSLYD. The helical transmembrane segment at 7–27 threads the bilayer; sequence ISCFAAGLAGNIFALALFLSP. One can recognise a MtN3/slv 1 domain in the interval 13 to 98; sequence GLAGNIFALA…CLFIFYADSR (86 aa). Topologically, residues 28–45 are cytoplasmic; the sequence is VTTFKRILKAKSTERFDG. A helical transmembrane segment spans residues 46–66; the sequence is LPYLFSLLNCLICLWYGLPWV. The Extracellular segment spans residues 67 to 72; sequence ADGRLL. The chain crosses the membrane as a helical span at residues 73–93; it reads VATVNGIGAVFQLAYICLFIF. Topologically, residues 94–103 are cytoplasmic; that stretch reads YADSRKTRMK. The helical transmembrane segment at 104 to 124 threads the bilayer; that stretch reads IIGLLVLVVCGFALVSHASVF. Residues 125–137 are Extracellular-facing; the sequence is FFDQPLRQQFVGA. The 85-residue stretch at 133–217 folds into the MtN3/slv 2 domain; sequence QFVGAVSMAS…LALYAYYSRK (85 aa). The chain crosses the membrane as a helical span at residues 138 to 158; it reads VSMASLISMFASPLAVMGVVI. Over 159-167 the chain is Cytoplasmic; that stretch reads RSESVEFMP. Residues 168-188 traverse the membrane as a helical segment; it reads FYLSLSTFLMSASFALYGLLL. At 189 to 190 the chain is on the extracellular side; it reads RD. A helical transmembrane segment spans residues 191–211; sequence FFIYFPNGLGLILGAMQLALY. At 212–230 the chain is on the cytoplasmic side; the sequence is AYYSRKWRGQDSSAPLLLA.

It belongs to the SWEET sugar transporter family. Forms homooligomers and/or heterooligomers.

It is found in the cell membrane. In terms of biological role, mediates both low-affinity uptake and efflux of sugar across the plasma membrane. The sequence is that of Bidirectional sugar transporter SWEET2b (SWEET2B) from Oryza sativa subsp. indica (Rice).